Consider the following 368-residue polypeptide: Alanine racemase (368 aa).

Lys40 acts as the Proton acceptor; specific for D-alanine in catalysis. The residue at position 40 (Lys40) is an N6-(pyridoxal phosphate)lysine. Position 134 (Arg134) interacts with substrate. Tyr263 functions as the Proton acceptor; specific for L-alanine in the catalytic mechanism. Residue Met310 participates in substrate binding.

The protein belongs to the alanine racemase family. Pyridoxal 5'-phosphate is required as a cofactor.

The catalysed reaction is L-alanine = D-alanine. The protein operates within amino-acid biosynthesis; D-alanine biosynthesis; D-alanine from L-alanine: step 1/1. In terms of biological role, catalyzes the interconversion of L-alanine and D-alanine. May also act on other amino acids. The protein is Alanine racemase (alr) of Listeria monocytogenes serotype 4b (strain CLIP80459).